Here is a 557-residue protein sequence, read N- to C-terminus: NADP-dependent malic enzyme (557 aa).

The active-site Proton donor is Tyr-91. Arg-144 contacts NADP(+). The substrate site is built by Arg-144 and Lys-162. Lys-162 functions as the Proton acceptor in the catalytic mechanism. Glu-234 and Asp-235 together coordinate Mn(2+). Asn-238 provides a ligand contact to NADP(+). Position 258 (Asp-258) interacts with Mn(2+). Residues 291 to 294, Ser-325, Asn-397, and Asn-443 each bind NADP(+); that span reads AGEA. Asn-443 contacts substrate.

Belongs to the malic enzymes family. As to quaternary structure, homotetramer. Mg(2+) is required as a cofactor. Requires Mn(2+) as cofactor. In terms of processing, the N-terminus is blocked.

Its subcellular location is the cytoplasm. The enzyme catalyses (S)-malate + NADP(+) = pyruvate + CO2 + NADPH. It catalyses the reaction oxaloacetate + H(+) = pyruvate + CO2. In Columba livia (Rock dove), this protein is NADP-dependent malic enzyme (ME1).